The primary structure comprises 127 residues: Aspartate 1-decarboxylase (127 aa).

Catalysis depends on S25, which acts as the Schiff-base intermediate with substrate; via pyruvic acid. Residue S25 is modified to Pyruvic acid (Ser). A substrate-binding site is contributed by T57. Y58 (proton donor) is an active-site residue. A substrate-binding site is contributed by 73–75; sequence GSA.

The protein belongs to the PanD family. Heterooctamer of four alpha and four beta subunits. Pyruvate is required as a cofactor. Post-translationally, is synthesized initially as an inactive proenzyme, which is activated by self-cleavage at a specific serine bond to produce a beta-subunit with a hydroxyl group at its C-terminus and an alpha-subunit with a pyruvoyl group at its N-terminus.

The protein resides in the cytoplasm. It catalyses the reaction L-aspartate + H(+) = beta-alanine + CO2. It participates in cofactor biosynthesis; (R)-pantothenate biosynthesis; beta-alanine from L-aspartate: step 1/1. Its function is as follows. Catalyzes the pyruvoyl-dependent decarboxylation of aspartate to produce beta-alanine. The sequence is that of Aspartate 1-decarboxylase from Dechloromonas aromatica (strain RCB).